The chain runs to 665 residues: Fructose-1,6-bisphosphatase class 3 (665 aa).

It belongs to the FBPase class 3 family. Mn(2+) is required as a cofactor.

The catalysed reaction is beta-D-fructose 1,6-bisphosphate + H2O = beta-D-fructose 6-phosphate + phosphate. The protein operates within carbohydrate biosynthesis; gluconeogenesis. The chain is Fructose-1,6-bisphosphatase class 3 from Clostridium acetobutylicum (strain ATCC 824 / DSM 792 / JCM 1419 / IAM 19013 / LMG 5710 / NBRC 13948 / NRRL B-527 / VKM B-1787 / 2291 / W).